The sequence spans 362 residues: Alanine racemase (362 aa).

Lys35 functions as the Proton acceptor; specific for D-alanine in the catalytic mechanism. Lys35 bears the N6-(pyridoxal phosphate)lysine mark. Arg130 lines the substrate pocket. Tyr257 acts as the Proton acceptor; specific for L-alanine in catalysis. Met305 is a binding site for substrate.

This sequence belongs to the alanine racemase family. Requires pyridoxal 5'-phosphate as cofactor.

It catalyses the reaction L-alanine = D-alanine. Its pathway is amino-acid biosynthesis; D-alanine biosynthesis; D-alanine from L-alanine: step 1/1. Catalyzes the interconversion of L-alanine and D-alanine. May also act on other amino acids. In Nitrosomonas europaea (strain ATCC 19718 / CIP 103999 / KCTC 2705 / NBRC 14298), this protein is Alanine racemase (alr).